We begin with the raw amino-acid sequence, 754 residues long: 1,4-alpha-glucan branching enzyme GlgB (754 aa).

Asp-431 functions as the Nucleophile in the catalytic mechanism. Glu-484 acts as the Proton donor in catalysis.

It belongs to the glycosyl hydrolase 13 family. GlgB subfamily. As to quaternary structure, monomer.

The catalysed reaction is Transfers a segment of a (1-&gt;4)-alpha-D-glucan chain to a primary hydroxy group in a similar glucan chain.. It functions in the pathway glycan biosynthesis; glycogen biosynthesis. In terms of biological role, catalyzes the formation of the alpha-1,6-glucosidic linkages in glycogen by scission of a 1,4-alpha-linked oligosaccharide from growing alpha-1,4-glucan chains and the subsequent attachment of the oligosaccharide to the alpha-1,6 position. In Prochlorococcus marinus (strain MIT 9301), this protein is 1,4-alpha-glucan branching enzyme GlgB.